Consider the following 583-residue polypeptide: Potassium-transporting ATPase potassium-binding subunit (583 aa).

A run of 10 helical transmembrane segments spans residues 3–23 (NIIWQCLLYLSLLTALAWPLG), 66–86 (MACVIAFSAVSLVALTALLMA), 135–155 (GLTVQNFVSAAVGIAVLFALI), 177–197 (VLYILLPLSLVMSLLLIEQGV), 266–286 (LEMLALLLIPAALCFTFGAKI), 293–313 (VAIFAAMFILLTSAVSFTVQA), 402–422 (GLYGMLAFVLLTVFLAGLMVG), 440–460 (AVVVCLTTPVVILAGGGLMCL), 506–526 (VLLGVLMLAGRFAPIAAILAM), and 549–569 (LFIFLLIFVILLVGALSFFPA).

The protein belongs to the KdpA family. As to quaternary structure, the system is composed of three essential subunits: KdpA, KdpB and KdpC.

It is found in the cell inner membrane. In terms of biological role, part of the high-affinity ATP-driven potassium transport (or Kdp) system, which catalyzes the hydrolysis of ATP coupled with the electrogenic transport of potassium into the cytoplasm. This subunit binds the periplasmic potassium ions and delivers the ions to the membrane domain of KdpB through an intramembrane tunnel. This is Potassium-transporting ATPase potassium-binding subunit from Desulfovibrio desulfuricans (strain ATCC 27774 / DSM 6949 / MB).